A 229-amino-acid polypeptide reads, in one-letter code: Enolase-phosphatase E1 (229 aa).

Belongs to the HAD-like hydrolase superfamily. MasA/MtnC family. In terms of assembly, monomer. The cofactor is Mg(2+).

The enzyme catalyses 5-methylsulfanyl-2,3-dioxopentyl phosphate + H2O = 1,2-dihydroxy-5-(methylsulfanyl)pent-1-en-3-one + phosphate. Its pathway is amino-acid biosynthesis; L-methionine biosynthesis via salvage pathway; L-methionine from S-methyl-5-thio-alpha-D-ribose 1-phosphate: step 3/6. It participates in amino-acid biosynthesis; L-methionine biosynthesis via salvage pathway; L-methionine from S-methyl-5-thio-alpha-D-ribose 1-phosphate: step 4/6. Its function is as follows. Bifunctional enzyme that catalyzes the enolization of 2,3-diketo-5-methylthiopentyl-1-phosphate (DK-MTP-1-P) into the intermediate 2-hydroxy-3-keto-5-methylthiopentenyl-1-phosphate (HK-MTPenyl-1-P), which is then dephosphorylated to form the acireductone 1,2-dihydroxy-3-keto-5-methylthiopentene (DHK-MTPene). In Yersinia enterocolitica serotype O:8 / biotype 1B (strain NCTC 13174 / 8081), this protein is Enolase-phosphatase E1.